The sequence spans 318 residues: MSVPAAAGAARHRRRHVLDLDDFSAQEIDEILETAVSMKEVLGRAIKQVPTLRGKTIVNMFFEESTRTRISFELAGKALSANVVNFTARGSSVEKGESLIDTVRTLQALGADMLVMRHSESGAPYLVAQHFHGSVINAGDGRHAHPTQALLDLFTVRQRLGRIEGLKVVIVGDILHSRVARSDLWGFTRMGALVTLCAPQTLIGPEAFWKATWPDLTITSNLDECVRDADVIMTLRLQKERMEAGLLPSLREYTRFFAITAERVARAAPHCLVMHPGPMNEGVEIMPDVAVSAQSVIEEQVANGVAVRMALLYRLSGE.

Residues arginine 67 and threonine 68 each coordinate carbamoyl phosphate. Lysine 95 provides a ligand contact to L-aspartate. Carbamoyl phosphate-binding residues include arginine 117, histidine 145, and glutamine 148. 2 residues coordinate L-aspartate: arginine 178 and arginine 236. The carbamoyl phosphate site is built by glycine 277 and proline 278.

It belongs to the aspartate/ornithine carbamoyltransferase superfamily. ATCase family. As to quaternary structure, heterododecamer (2C3:3R2) of six catalytic PyrB chains organized as two trimers (C3), and six regulatory PyrI chains organized as three dimers (R2).

It catalyses the reaction carbamoyl phosphate + L-aspartate = N-carbamoyl-L-aspartate + phosphate + H(+). Its pathway is pyrimidine metabolism; UMP biosynthesis via de novo pathway; (S)-dihydroorotate from bicarbonate: step 2/3. In terms of biological role, catalyzes the condensation of carbamoyl phosphate and aspartate to form carbamoyl aspartate and inorganic phosphate, the committed step in the de novo pyrimidine nucleotide biosynthesis pathway. The sequence is that of Aspartate carbamoyltransferase catalytic subunit from Roseiflexus castenholzii (strain DSM 13941 / HLO8).